Here is a 327-residue protein sequence, read N- to C-terminus: Gonadotropin-releasing hormone receptor (327 aa).

The Extracellular portion of the chain corresponds to 1–37 (MASASPEQNQNHCSAVNNSNMLMQGNLPTLTLSGKIR). The N-linked (GlcNAc...) asparagine glycan is linked to N17. Residues 38-57 (VTVTFFLFLLSTIFNASFLL) traverse the membrane as a helical segment. The Cytoplasmic portion of the chain corresponds to 58-76 (KLQKWTQKKEKGKKLSRMK). A helical membrane pass occupies residues 77–96 (VLLKHLTLANLLETLIVMPL). The Extracellular portion of the chain corresponds to 97 to 114 (DGMWNITVQWYAGEFLCK). N-linked (GlcNAc...) asparagine glycosylation is present at N101. A disulfide bond links C113 and C195. The helical transmembrane segment at 115–136 (VLSYLKLFSMYAPAFMMVVISL) threads the bilayer. At 137 to 163 (DRSLAITRPLAMKNNGKLGQSMIGLAW) the chain is on the cytoplasmic side. Residues 164-183 (LLSGIFAGPQLYIFRMIHLA) traverse the membrane as a helical segment. Over 184–211 (DSSGQTEGFPQCVTHCSFPQWWHQAFYN) the chain is Extracellular. The helical transmembrane segment at 212–231 (FFTFSCLFIIPLFITLICNA) threads the bilayer. The Cytoplasmic segment spans residues 232–280 (KIIFTLTRVLHQDPHELQLNQSKNNIPRARLRTLKMTVAFATSFTVCWT). Residues 281–299 (PYYVLGIWYWFDPEMLNRV) form a helical membrane-spanning segment. The Extracellular portion of the chain corresponds to 300 to 305 (SDPVNH). Residues 306-325 (FFFLFALLNPCFDPLIYGYF) traverse the membrane as a helical segment. The Cytoplasmic portion of the chain corresponds to 326 to 327 (SL).

The protein belongs to the G-protein coupled receptor 1 family.

It localises to the cell membrane. Functionally, receptor for gonadotropin releasing hormone (GnRH) that mediates the action of GnRH to stimulate the secretion of the gonadotropic hormones luteinizing hormone (LH) and follicle-stimulating hormone (FSH). This receptor mediates its action by association with G-proteins that activate a phosphatidylinositol-calcium second messenger system. The protein is Gonadotropin-releasing hormone receptor (GNRHR) of Canis lupus familiaris (Dog).